Here is a 132-residue protein sequence, read N- to C-terminus: Replication enhancer protein (132 aa).

The protein belongs to the geminiviridae replication enhancer protein family. Homooligomer. Interacts with the replication-associated protein (REP). Interacts with host proliferating cell nuclear antigen (PCNA). Interacts with host retinoblastoma-related protein 1 (RBR1), and may thereby deregulate the host cell cycle. Oligomerization and interaction with PCNA are necessary for optimal replication enhancement.

In terms of biological role, increases viral DNA accumulation. Enhances infectivity and symptom expression. This is Replication enhancer protein from Pepper huasteco yellow vein virus (PHYVV).